A 322-amino-acid polypeptide reads, in one-letter code: Formimidoylglutamase (322 aa).

6 residues coordinate Mn(2+): His130, Asp156, His158, Asp160, Cys244, and Asp246.

The protein belongs to the arginase family. Mn(2+) is required as a cofactor.

It catalyses the reaction N-formimidoyl-L-glutamate + H2O = formamide + L-glutamate. Its pathway is amino-acid degradation; L-histidine degradation into L-glutamate; L-glutamate from N-formimidoyl-L-glutamate (hydrolase route): step 1/1. Functionally, catalyzes the conversion of N-formimidoyl-L-glutamate to L-glutamate and formamide. In Geobacillus thermodenitrificans (strain NG80-2), this protein is Formimidoylglutamase.